A 37-amino-acid polypeptide reads, in one-letter code: Large ribosomal subunit protein bL36 (37 aa).

This sequence belongs to the bacterial ribosomal protein bL36 family.

This chain is Large ribosomal subunit protein bL36, found in Pasteurella multocida (strain Pm70).